A 679-amino-acid chain; its full sequence is Translation initiation factor IF-2 (679 aa).

The tr-type G domain occupies 178 to 347 (KRPPIITVMG…LLTSEMQELK (170 aa)). Positions 187-194 (GHVDHGKT) are G1. Residue 187–194 (GHVDHGKT) coordinates GTP. Residues 212 to 216 (GITQH) form a G2 region. Positions 233 to 236 (DTPG) are G3. Residues 233-237 (DTPGH) and 287-290 (NKMD) contribute to the GTP site. Positions 287 to 290 (NKMD) are G4. The tract at residues 323 to 325 (SAK) is G5.

The protein belongs to the TRAFAC class translation factor GTPase superfamily. Classic translation factor GTPase family. IF-2 subfamily.

It is found in the cytoplasm. In terms of biological role, one of the essential components for the initiation of protein synthesis. Protects formylmethionyl-tRNA from spontaneous hydrolysis and promotes its binding to the 30S ribosomal subunits. Also involved in the hydrolysis of GTP during the formation of the 70S ribosomal complex. The sequence is that of Translation initiation factor IF-2 from Clostridium perfringens (strain ATCC 13124 / DSM 756 / JCM 1290 / NCIMB 6125 / NCTC 8237 / Type A).